The primary structure comprises 434 residues: Septin-6 (434 aa).

N-acetylalanine is present on Ala-2. Ser-27 carries the post-translational modification Phosphoserine. The Septin-type G domain occupies 39–305 (QGFCFNILCV…ELYRRCKLEE (267 aa)). A G1 motif region spans residues 49-56 (GETGLGKS). GTP-binding positions include 49–56 (GETGLGKS), Gly-104, 185–193 (KADAISKSE), Gly-239, and Arg-254. The interval 101–104 (STVG) is G3 motif. A G4 motif region spans residues 184–187 (AKAD). Positions 321 to 409 (QETYEAKRNE…KTAAELLQSQ (89 aa)) form a coiled coil. Position 367 is an N6-acetyllysine (Lys-367). The segment at 405-434 (LLQSQGSQAGGSQTLKRDKEKKNNPWLCTE) is disordered. The span at 407 to 417 (QSQGSQAGGSQ) shows a compositional bias: low complexity. A Phosphoserine modification is found at Ser-416. Position 418 is a phosphothreonine (Thr-418).

It belongs to the TRAFAC class TrmE-Era-EngA-EngB-Septin-like GTPase superfamily. Septin GTPase family. Septins polymerize into heterooligomeric protein complexes that form filaments, and associate with cellular membranes, actin filaments and microtubules. GTPase activity is required for filament formation. Filaments are assembled from asymmetrical heterotrimers, composed of SEPTIN2, SEPTIN6 and SEPTIN7 that associate head-to-head to form a hexameric unit. Within the trimer, directly interacts with SEPTIN2 and SEPTIN7. Also interacts with SEPTIN9 and SEPTIN12. Interaction with SEPTIN12 alters filament structure. Component of a septin core octameric complex consisting of SEPTIN12, SEPTIN7, SEPTIN6 and SEPTIN2 or SEPTIN4 in the order 12-7-6-2-2-6-7-12 or 12-7-6-4-4-6-7-12 and located in the sperm annulus. Interacts with SOCS7. Interacts with HNRNPA1. In terms of assembly, (Microbial infection) Interacts with HCV NS5B. In terms of tissue distribution, widely expressed.

The protein localises to the cytoplasm. Its subcellular location is the cytoskeleton. The protein resides in the spindle. It is found in the chromosome. It localises to the centromere. The protein localises to the kinetochore. Its subcellular location is the cleavage furrow. The protein resides in the midbody. It is found in the cell projection. It localises to the cilium. The protein localises to the flagellum. Filament-forming cytoskeletal GTPase. Required for normal organization of the actin cytoskeleton. Involved in cytokinesis. May play a role in HCV RNA replication. Forms a filamentous structure with SEPTIN12, SEPTIN6, SEPTIN2 and probably SEPTIN4 at the sperm annulus which is required for the structural integrity and motility of the sperm tail during postmeiotic differentiation. This chain is Septin-6, found in Homo sapiens (Human).